The primary structure comprises 155 residues: Chromosomal passenger complex protein bir-1 (155 aa).

Residues 20 to 87 (RLMTFKNFEY…KRDEPCEFVR (68 aa)) form a BIR repeat. Residues Cys57, Cys60, His76, and Cys83 each contribute to the Zn(2+) site.

Belongs to the IAP family. Component of the CPC complex which consists of icp-1; csc-1; bir-1 and air-2. Within the complex, interacts with csc-1, icp-1 and air-2. Interacts with csc-1 in a zinc-dependent-manner; the interaction is direct. In terms of tissue distribution, expressed in oocytes and sperm.

It is found in the chromosome. The protein resides in the cytoplasm. The protein localises to the cytoskeleton. Its subcellular location is the spindle. It localises to the midbody. In terms of biological role, component of the chromosomal passenger complex (CPC), a complex that acts as a key regulator of chromosome segregation and cytokinesis. The CPC complex has essential functions at the centromere in ensuring correct chromosome condensation, alignment and segregation. In the complex, required to direct the Aurora B/air-2 kinase to chromosomes. Also functions in spindle midzone formation and in the formation of polar bodies during oogenesis. Required for the localization of the kinetochore component hcp-1 to chromosomes. Involved in the positive regulation of transcription. Involved in the transcriptional regulation of collagen genes. This chain is Chromosomal passenger complex protein bir-1, found in Caenorhabditis elegans.